We begin with the raw amino-acid sequence, 88 residues long: MANIKSQIKRNKTNEKARLRNKAVKSSLKTAIRKAREAVVAGDVEKATTAVRDASRQLDKAVSKGVIHKNAAANKKSALASKVASLQA.

Residues 1–27 form a disordered region; it reads MANIKSQIKRNKTNEKARLRNKAVKSS.

It belongs to the bacterial ribosomal protein bS20 family.

Functionally, binds directly to 16S ribosomal RNA. The sequence is that of Small ribosomal subunit protein bS20 from Streptomyces griseus subsp. griseus (strain JCM 4626 / CBS 651.72 / NBRC 13350 / KCC S-0626 / ISP 5235).